The sequence spans 303 residues: MIYTVTLNPSVDYIVHVEDFTVGGLNRSSYDTKYPGGKGINVSRLLKRHHVASKALGFVGGFTGEYIKTFLREENLETAFSEVKGDTRINVKLKTGDETEINGQGPTISDEDFKAFLEQFQSLQEGDIVVLAGSIPSSLPHDTYEKIAEACKQQNARVVLDISGEALLKATEMKPFLMKPNHHELGEMFGTAITSVEEAVPYGKKLVEQGAEHVIVSMAGDGALLFTNEAVYFANVPKGKLVNSVGAGDSVVAGFLAGISKQLPLEEAFRLGVTSGSATAFSEELGTEEFVQQLLPEVKVTRL.

Residue 248 to 249 (GD) coordinates ATP. The Proton acceptor role is filled by D249.

It belongs to the carbohydrate kinase PfkB family.

The enzyme catalyses beta-D-fructose 1-phosphate + ATP = beta-D-fructose 1,6-bisphosphate + ADP + H(+). Its function is as follows. Catalyzes the ATP-dependent phosphorylation of fructose-l-phosphate to fructose-l,6-bisphosphate. The protein is 1-phosphofructokinase (fruK) of Bacillus subtilis (strain 168).